Here is a 407-residue protein sequence, read N- to C-terminus: Phosphonoacetate hydrolase (407 aa).

7 residues coordinate Zn(2+): aspartate 25, threonine 64, aspartate 202, histidine 206, aspartate 241, histidine 242, and histidine 368. Residues threonine 64 and aspartate 202 each contribute to the substrate site. The substrate site is built by histidine 242 and histidine 368.

It belongs to the alkaline phosphatase family. PhnA subfamily. As to quaternary structure, homodimer. Zn(2+) serves as cofactor.

It carries out the reaction phosphonoacetate + H2O = acetate + phosphate + H(+). In terms of biological role, specifically hydrolyzes phosphonoacetate. Does not have activity on other organophosphonates or acetates. The protein is Phosphonoacetate hydrolase of Pseudomonas cedrina.